Consider the following 226-residue polypeptide: MSAILKATNINKIYDEGAVSTQVLTGLDLTVTAGERIAIVGTSGSGKSTLLHLLGGLDTPTSGEVWLHGQLLNSMNETERGAMRNKHLGFIYQFHHLLAEFTAIENVAMPLLMRPEVSTAEARQQAIDILNSVGLEHRLAHRPGELSGGERQRVAIARALVTKPSLILADEPTGNLDYDNAQSVFGLLSELQSTMQTALLMVTHDRNLAALADRQLLLRNGHWENY.

Residues 5-226 enclose the ABC transporter domain; sequence LKATNINKIY…LLRNGHWENY (222 aa). 41–48 is an ATP binding site; it reads GTSGSGKS.

The protein belongs to the ABC transporter superfamily. Lipoprotein translocase (TC 3.A.1.125) family. In terms of assembly, the complex is composed of two ATP-binding proteins (LolD) and two transmembrane proteins (LolC and LolE).

It is found in the cell inner membrane. In terms of biological role, part of the ABC transporter complex LolCDE involved in the translocation of mature outer membrane-directed lipoproteins, from the inner membrane to the periplasmic chaperone, LolA. Responsible for the formation of the LolA-lipoprotein complex in an ATP-dependent manner. This chain is Lipoprotein-releasing system ATP-binding protein LolD, found in Psychrobacter cryohalolentis (strain ATCC BAA-1226 / DSM 17306 / VKM B-2378 / K5).